The sequence spans 199 residues: ATP synthase subunit a (199 aa).

A run of 5 helical transmembrane segments spans residues 2–22 (NQVYFLDIFMFVFVLQFLFYF), 53–73 (VISVFTFIILLTCCFGGYFTY), 80–100 (MVEFTFVYAAVAWLSTLLTFI), 141–161 (LTVNIMVGHLISMMLYQGLEL), and 169–189 (WLSIFAIMMECFVFFIQSYIF).

Belongs to the ATPase A chain family. F-type ATPases have 2 components, CF(1) - the catalytic core - and CF(0) - the membrane proton channel. CF(1) has five subunits: alpha(3), beta(3), gamma(1), delta(1), epsilon(1). CF(0) has three main subunits: a, b and c.

It localises to the mitochondrion inner membrane. Functionally, mitochondrial membrane ATP synthase (F(1)F(0) ATP synthase or Complex V) produces ATP from ADP in the presence of a proton gradient across the membrane which is generated by electron transport complexes of the respiratory chain. F-type ATPases consist of two structural domains, F(1) - containing the extramembraneous catalytic core and F(0) - containing the membrane proton channel, linked together by a central stalk and a peripheral stalk. During catalysis, ATP synthesis in the catalytic domain of F(1) is coupled via a rotary mechanism of the central stalk subunits to proton translocation. Key component of the proton channel; it may play a direct role in the translocation of protons across the membrane. This is ATP synthase subunit a (atp6) from Caenorhabditis briggsae.